The sequence spans 92 residues: CRISPR-associated endoribonuclease Cas2 (92 aa).

Aspartate 9 serves as a coordination point for Mg(2+).

Belongs to the CRISPR-associated endoribonuclease Cas2 protein family. Homodimer, forms a heterotetramer with a Cas1 homodimer. Requires Mg(2+) as cofactor.

CRISPR (clustered regularly interspaced short palindromic repeat), is an adaptive immune system that provides protection against mobile genetic elements (viruses, transposable elements and conjugative plasmids). CRISPR clusters contain sequences complementary to antecedent mobile elements and target invading nucleic acids. CRISPR clusters are transcribed and processed into CRISPR RNA (crRNA). Functions as a ssRNA-specific endoribonuclease. Involved in the integration of spacer DNA into the CRISPR cassette. This Aeropyrum pernix (strain ATCC 700893 / DSM 11879 / JCM 9820 / NBRC 100138 / K1) protein is CRISPR-associated endoribonuclease Cas2.